The following is a 295-amino-acid chain: Phosphatidylserine decarboxylase proenzyme (295 aa).

Catalysis depends on charge relay system; for autoendoproteolytic cleavage activity residues Asp113, His169, and Ser256. The Schiff-base intermediate with substrate; via pyruvic acid; for decarboxylase activity role is filled by Ser256. Ser256 carries the post-translational modification Pyruvic acid (Ser); by autocatalysis.

The protein belongs to the phosphatidylserine decarboxylase family. PSD-B subfamily. Prokaryotic type II sub-subfamily. As to quaternary structure, heterodimer of a large membrane-associated beta subunit and a small pyruvoyl-containing alpha subunit. The cofactor is pyruvate. Post-translationally, is synthesized initially as an inactive proenzyme. Formation of the active enzyme involves a self-maturation process in which the active site pyruvoyl group is generated from an internal serine residue via an autocatalytic post-translational modification. Two non-identical subunits are generated from the proenzyme in this reaction, and the pyruvate is formed at the N-terminus of the alpha chain, which is derived from the carboxyl end of the proenzyme. The autoendoproteolytic cleavage occurs by a canonical serine protease mechanism, in which the side chain hydroxyl group of the serine supplies its oxygen atom to form the C-terminus of the beta chain, while the remainder of the serine residue undergoes an oxidative deamination to produce ammonia and the pyruvoyl prosthetic group on the alpha chain. During this reaction, the Ser that is part of the protease active site of the proenzyme becomes the pyruvoyl prosthetic group, which constitutes an essential element of the active site of the mature decarboxylase.

The protein resides in the cell membrane. The enzyme catalyses a 1,2-diacyl-sn-glycero-3-phospho-L-serine + H(+) = a 1,2-diacyl-sn-glycero-3-phosphoethanolamine + CO2. It functions in the pathway phospholipid metabolism; phosphatidylethanolamine biosynthesis; phosphatidylethanolamine from CDP-diacylglycerol: step 2/2. Functionally, catalyzes the formation of phosphatidylethanolamine (PtdEtn) from phosphatidylserine (PtdSer). The chain is Phosphatidylserine decarboxylase proenzyme from Clostridium botulinum (strain Kyoto / Type A2).